Reading from the N-terminus, the 178-residue chain is MNPRRKKRLAIVGSILIGIGVVSGLVLYALSQNIDLFFTPSEITQGKKETGLKPSLGQRIRIGGLVVPGSVKRDPENLKVSFRLSDMAMPIVFKDSDPMVTVYYEGILPDLFREGQGIVANGTLTEHPPTGLSIEASEVLAKHDENYMPAELAEAAGQKHDKATYSDKQLESKKTNSY.

Topologically, residues 1 to 8 are cytoplasmic; that stretch reads MNPRRKKR. Residues 9–29 traverse the membrane as a helical; Signal-anchor for type II membrane protein segment; sequence LAIVGSILIGIGVVSGLVLYA. Residues 30–178 lie on the Periplasmic side of the membrane; that stretch reads LSQNIDLFFT…QLESKKTNSY (149 aa). Heme is bound by residues histidine 143 and tyrosine 147. The interval 154–178 is disordered; it reads EAAGQKHDKATYSDKQLESKKTNSY. Over residues 157-178 the composition is skewed to basic and acidic residues; sequence GQKHDKATYSDKQLESKKTNSY.

Belongs to the CcmE/CycJ family.

It localises to the cell inner membrane. Its function is as follows. Heme chaperone required for the biogenesis of c-type cytochromes. Transiently binds heme delivered by CcmC and transfers the heme to apo-cytochromes in a process facilitated by CcmF and CcmH. The protein is Cytochrome c-type biogenesis protein CcmE of Colwellia psychrerythraea (strain 34H / ATCC BAA-681) (Vibrio psychroerythus).